We begin with the raw amino-acid sequence, 658 residues long: Phosphomethylpyrimidine synthase (658 aa).

The segment at 1–22 (MNNSTDAVNPAKKPQTRREKRE) is disordered. Substrate contacts are provided by residues N248, M277, Y306, H342, 362–364 (SRG), 403–406 (DGLR), and E442. Residue H446 participates in Zn(2+) binding. Y469 lines the substrate pocket. H510 contacts Zn(2+). 3 residues coordinate [4Fe-4S] cluster: C590, C593, and C598.

The protein belongs to the ThiC family. In terms of assembly, homodimer. The cofactor is [4Fe-4S] cluster.

The catalysed reaction is 5-amino-1-(5-phospho-beta-D-ribosyl)imidazole + S-adenosyl-L-methionine = 4-amino-2-methyl-5-(phosphooxymethyl)pyrimidine + CO + 5'-deoxyadenosine + formate + L-methionine + 3 H(+). Its pathway is cofactor biosynthesis; thiamine diphosphate biosynthesis. Catalyzes the synthesis of the hydroxymethylpyrimidine phosphate (HMP-P) moiety of thiamine from aminoimidazole ribotide (AIR) in a radical S-adenosyl-L-methionine (SAM)-dependent reaction. The chain is Phosphomethylpyrimidine synthase from Colwellia psychrerythraea (strain 34H / ATCC BAA-681) (Vibrio psychroerythus).